Consider the following 195-residue polypeptide: Interferon tau-1 (195 aa).

The signal sequence occupies residues 1 to 23 (MAFVLSLLMALVLVSYGPGRSLG). Disulfide bonds link cysteine 24–cysteine 122 and cysteine 52–cysteine 162. A glycan (N-linked (GlcNAc...) asparagine) is linked at asparagine 101.

It belongs to the alpha/beta interferon family. IFN-alphaII subfamily. In terms of tissue distribution, constitutively and exclusively expressed in the mononuclear cells of the extraembryonic trophectoderm.

The protein resides in the secreted. Paracrine hormone primarily responsible for maternal recognition of pregnancy. Interacts with endometrial receptors, probably type I interferon receptors, and blocks estrogen receptor expression, preventing the estrogen-induced increase in oxytocin receptor expression in the endometrium. This results in the suppression of the pulsatile endometrial release of the luteolytic hormone prostaglandin F2-alpha, hindering the regression of the corpus luteum (luteolysis) and therefore a return to ovarian cyclicity. This, and a possible direct effect of IFN-tau on prostaglandin synthesis, leads in turn to continued ovarian progesterone secretion, which stimulates the secretion by the endometrium of the nutrients required for the growth of the conceptus. In summary, displays particularly high antiviral and antiproliferative potency concurrently with particular weak cytotoxicity, high antiluteolytic activity and immunomodulatory properties. In contrast with other IFNs, IFN-tau is not virally inducible. This chain is Interferon tau-1 (IFNT1), found in Bos taurus (Bovine).